Consider the following 319-residue polypeptide: MKRIGVLTSGGDSPGMNAAIRAVVRKAIFHDIEVYGIYHGYAGLISGHIEKLELGSVGDIIHRGGTKLYTARCPEFKDPEVRLKGIEQLKKHGIEGLVVIGGDGSYQGAKKLTEQGFPCVGVPGTIDNDIPGTDFTIGFDTALNTVIDAIDKIRDTATSHERTYVIEVMGRHAGDIALWAGLADGAETILIPEEEYDMEDVIARLKRGSERGKKHSIIVVAEGVGSAIDIGKHIEEATNFDTRVTVLGHVQRGGSPSAQDRVLASRLGARAVELLIAGKGGRCVGIQDNKLVDHDIIEALAQKHTIDKDMYQLSKELSI.

An ATP-binding site is contributed by glycine 11. 21–25 (RAVVR) contributes to the ADP binding site. ATP-binding positions include 72-73 (RC) and 102-105 (GDGS). Position 103 (aspartate 103) interacts with Mg(2+). 125–127 (TID) is a binding site for substrate. Residue aspartate 127 is the Proton acceptor of the active site. Arginine 154 is an ADP binding site. Substrate is bound by residues arginine 162 and 169–171 (MGR). ADP contacts are provided by residues 185 to 187 (GAE), arginine 211, and 213 to 215 (KKH). Substrate contacts are provided by residues glutamate 222, arginine 243, and 249-252 (HVQR).

The protein belongs to the phosphofructokinase type A (PFKA) family. ATP-dependent PFK group I subfamily. Prokaryotic clade 'B1' sub-subfamily. As to quaternary structure, homotetramer. Mg(2+) serves as cofactor.

Its subcellular location is the cytoplasm. The catalysed reaction is beta-D-fructose 6-phosphate + ATP = beta-D-fructose 1,6-bisphosphate + ADP + H(+). It participates in carbohydrate degradation; glycolysis; D-glyceraldehyde 3-phosphate and glycerone phosphate from D-glucose: step 3/4. Its activity is regulated as follows. Allosterically activated by ADP and other diphosphonucleosides, and allosterically inhibited by phosphoenolpyruvate. In terms of biological role, catalyzes the phosphorylation of D-fructose 6-phosphate to fructose 1,6-bisphosphate by ATP, the first committing step of glycolysis. In Bacillus anthracis (strain A0248), this protein is ATP-dependent 6-phosphofructokinase.